The primary structure comprises 449 residues: L-lysine-epsilon aminotransferase (449 aa).

Pyridoxal 5'-phosphate contacts are provided by Gly128 and Ala129. 2-oxoglutarate-binding residues include Arg170 and Gln274. Residue Arg170 participates in L-lysine binding. Gln274 lines the pyridoxal 5'-phosphate pocket. Position 300 is an N6-(pyridoxal phosphate)lysine (Lys300). Arg422 is a binding site for 2-oxoglutarate.

This sequence belongs to the class-III pyridoxal-phosphate-dependent aminotransferase family. Requires pyridoxal 5'-phosphate as cofactor.

It catalyses the reaction L-lysine + 2-oxoglutarate = (S)-2-amino-6-oxohexanoate + L-glutamate. Its function is as follows. Catalyzes the transfer of the terminal amino group of L-lysine to alpha-ketoglutarate to yield L-glutamate and 2-aminoadipate 6-semialdehyde ((S)-2-amino-6-oxohexanoate), which is spontaneously converted to the dehydrated form 1-piperideine 6-carboxylate. The chain is L-lysine-epsilon aminotransferase from Mycobacterium bovis (strain ATCC BAA-935 / AF2122/97).